The following is a 380-amino-acid chain: Fibromodulin (380 aa).

The signal sequence occupies residues 1–18 (MRWANILLVAGLCRASLG). Residues 71 to 109 (EAQQASSWQCPQECDCPPNFSSAMYCDTRNLRYLPFVPT) enclose the LRRNT domain. Asn89 is a glycosylation site (N-linked (GlcNAc...) asparagine). LRR repeat units lie at residues 110-131 (RMKY…AFDN), 134-147 (ELEW…QISS), 160-180 (NLER…PLPR), 181-202 (SLRE…ALEG), 205-227 (NLTA…KGLK), 228-248 (SLIL…GLPM), 249-270 (ALEQ…YFKV), and 273-293 (KLLY…STNT). N-linked (GlcNAc...) (keratan sulfate) asparagine glycosylation occurs at Asn131. A glycan (N-linked (GlcNAc...) (keratan sulfate) asparagine) is linked at Asn170. Asn205 carries an N-linked (GlcNAc...) (keratan sulfate) asparagine glycan. Asn295 carries N-linked (GlcNAc...) (keratan sulfate) asparagine glycosylation. LRR repeat units lie at residues 298 to 317 (SILE…RVST) and 318 to 339 (NLEN…SFCT). A disulfide bridge links Cys338 with Cys371. A glycan (N-linked (GlcNAc...) asparagine) is linked at Asn345. One copy of the LRR 11 repeat lies at 348 to 371 (RLQVLRLDGNEIKRNAMPPDAPLC).

Belongs to the small leucine-rich proteoglycan (SLRP) family. SLRP class II subfamily. In terms of assembly, binds to type I and type II collagen. In terms of processing, binds keratan sulfate chains.

Its subcellular location is the secreted. It is found in the extracellular space. It localises to the extracellular matrix. Functionally, affects the rate of fibrils formation. May have a primary role in collagen fibrillogenesis. This Gallus gallus (Chicken) protein is Fibromodulin (FMOD).